A 1693-amino-acid polypeptide reads, in one-letter code: Latrophilin Cirl (1693 aa).

The Extracellular portion of the chain corresponds to 1–753 (MLPTILSISY…LFTMFDGNMR (753 aa)). Positions 25-114 (ACEGKKLTIE…KYLEAHYQCI (90 aa)) constitute an SUEL-type lectin domain. N142 carries N-linked (GlcNAc...) asparagine glycosylation. 2 stretches are compositionally biased toward polar residues: residues 185–198 (TAVT…STTA) and 256–265 (NVTSPSNTRI). The tract at residues 185–299 (TAVTHSTPWS…PGTAASGSVA (115 aa)) is disordered. Residue N256 is glycosylated (N-linked (GlcNAc...) asparagine). Over residues 275–299 (DDGTLLTTKSSPNRPPGTAASGSVA) the composition is skewed to low complexity. N301, N340, N397, N641, N689, and N716 each carry an N-linked (GlcNAc...) asparagine glycan. The tract at residues 375-399 (YDEYDDDASSTTPAPSGGDCLHNSS) is disordered. One can recognise a GAIN-B domain in the interval 564 to 740 (KKSKIYSSVV…AILMDVVDEH (177 aa)). 2 disulfides stabilise this stretch: C695–C722 and C710–C724. Positions 695–740 (CVFWNYIDHAWSANGCSLESTNRTHSVCSCNHLTNFAILMDVVDEH) are GPS. The chain crosses the membrane as a helical span at residues 754–774 (IFIYISIGICVVFIVIALLTL). Over 775 to 787 (KLFNGVFVKSART) the chain is Cytoplasmic. Residues 788-808 (SIYTSIYLCLLAIELLFLLGI) form a helical membrane-spanning segment. Residues 809 to 814 (EQTETS) are Extracellular-facing. A helical transmembrane segment spans residues 815–835 (IFCGFITIFLHCAILSGTAWF). Residues 836-861 (CYEAFHSYSTLTSDELLLEVDQTPKV) lie on the Cytoplasmic side of the membrane. Residues 862–882 (NCYYLLSYGLSLSVVAISLVI) form a helical membrane-spanning segment. Topologically, residues 883–906 (DPSTYTQNDYCVLMEANALFYATF) are extracellular. Residues 907-927 (VVPVLVFFVAAIGYTFLSWII) traverse the membrane as a helical segment. The Cytoplasmic segment spans residues 928–954 (MCRKSRTGLKTKEHTRLASVRFDIRCS). Residues 955–975 (FVFLLLLSAVWCSAYFYLRGA) form a helical membrane-spanning segment. The Extracellular segment spans residues 976–985 (KMDDDTADVY). Residues 986–1006 (GYCFICFNTLLGLYIFVFHCI) traverse the membrane as a helical segment. The Cytoplasmic portion of the chain corresponds to 1007-1693 (QNEKIRREYR…VRCYLEPLAK (687 aa)). S1142 is subject to Phosphoserine. Disordered stretches follow at residues 1156 to 1194 (HKQQ…LKTP), 1220 to 1247 (KPNS…LHSR), 1294 to 1319 (QQQL…AEQH), 1433 to 1521 (GGGS…SDER), and 1601 to 1673 (LAVN…QQRH). Residues S1239 and S1246 each carry the phosphoserine modification. Residues 1294–1309 (QQQLRRQQLHQQQQQL) are compositionally biased toward low complexity. Phosphoserine is present on residues S1310 and S1311. Positions 1439–1464 (GGSVSSRSQQQQLKKQQQQQSLAQQR) are enriched in low complexity. Composition is skewed to acidic residues over residues 1472 to 1486 (DDDD…EEAT) and 1496 to 1507 (CDEDEEEDESDL). Basic and acidic residues predominate over residues 1508-1521 (EHDAHGLPPQSDER). Residues 1630 to 1655 (LQKLSPQSTTSSSSHTSHSNPNLHPH) are compositionally biased toward low complexity. Basic residues predominate over residues 1656–1672 (QLTHPHPHQHPPHHQQR).

It belongs to the G-protein coupled receptor 2 family. LN-TM7 subfamily. As to quaternary structure, forms a heterodimer, consisting of a large extracellular region non-covalently linked to a seven-transmembrane moiety. In terms of processing, proteolytically cleaved into 2 subunits, an extracellular subunit and a seven-transmembrane subunit.

The protein localises to the cell membrane. This is Latrophilin Cirl from Drosophila sechellia (Fruit fly).